The sequence spans 332 residues: uncharacterized protein (332 aa).

2 stretches are compositionally biased toward acidic residues: residues Glu-290 to Gly-314 and Glu-323 to Glu-332. The disordered stretch occupies residues Glu-290–Glu-332.

Belongs to the mimivirus L17x/L18x family.

This is an uncharacterized protein from Acanthamoeba polyphaga mimivirus (APMV).